Consider the following 318-residue polypeptide: NADH-ubiquinone oxidoreductase chain 1 (318 aa).

Helical transmembrane passes span 3–23 (LINL…LTLL), 69–89 (MLFI…WTPL), 102–122 (MLFI…SGWA), 144–164 (VTLA…TLLS), 171–191 (YIWL…STLA), 222–242 (LFFL…IILF), 253–273 (ELYT…FLWI), and 294–314 (LPLT…LAGI).

Belongs to the complex I subunit 1 family. In terms of assembly, core subunit of respiratory chain NADH dehydrogenase (Complex I) which is composed of 45 different subunits.

It localises to the mitochondrion inner membrane. It carries out the reaction a ubiquinone + NADH + 5 H(+)(in) = a ubiquinol + NAD(+) + 4 H(+)(out). Functionally, core subunit of the mitochondrial membrane respiratory chain NADH dehydrogenase (Complex I) which catalyzes electron transfer from NADH through the respiratory chain, using ubiquinone as an electron acceptor. Essential for the catalytic activity and assembly of complex I. The protein is NADH-ubiquinone oxidoreductase chain 1 (MT-ND1) of Murina florium (Flores tube-nosed bat).